Here is a 382-residue protein sequence, read N- to C-terminus: Galactokinase (382 aa).

Position 34–37 (34–37 (EHTD)) interacts with substrate. Position 124-130 (124-130 (GAGLSSS)) interacts with ATP. Residues Ser-130 and Glu-162 each contribute to the Mg(2+) site. The Proton acceptor role is filled by Asp-174. Tyr-223 provides a ligand contact to substrate.

Belongs to the GHMP kinase family. GalK subfamily.

The protein resides in the cytoplasm. The enzyme catalyses alpha-D-galactose + ATP = alpha-D-galactose 1-phosphate + ADP + H(+). It functions in the pathway carbohydrate metabolism; galactose metabolism. Functionally, catalyzes the transfer of the gamma-phosphate of ATP to D-galactose to form alpha-D-galactose-1-phosphate (Gal-1-P). The protein is Galactokinase of Salmonella heidelberg (strain SL476).